Consider the following 695-residue polypeptide: Lasso peptide isopeptidase AtxE2 (695 aa).

An N-terminal signal peptide occupies residues Met1–Ala30. 2 disulfide bridges follow: Cys296–Cys301 and Cys354–Cys363. Ser527 (nucleophile) is an active-site residue. A disulfide bridge links Cys551 with Cys552. Catalysis depends on charge relay system residues Glu610 and His638.

It localises to the cytoplasm. Lasso peptide isopeptidase that specifically hydrolyzes Astexin-2 and Astexin-3, converting them to linear peptides. Has only a few specific contacts with substrates, because it recognizes Astexin knotted structure (principally the loop structure). Its binding to lasso peptides opens them to expose the isopeptide bonds for hydrolysis. This is Lasso peptide isopeptidase AtxE2 from Asticcacaulis excentricus (strain ATCC 15261 / DSM 4724 / KCTC 12464 / NCIMB 9791 / VKM B-1370 / CB 48).